The chain runs to 441 residues: tRNA modification GTPase MnmE (441 aa).

Positions 21, 79, and 118 each coordinate (6S)-5-formyl-5,6,7,8-tetrahydrofolate. One can recognise a TrmE-type G domain in the interval 214–370 (GFKIAIVGKP…LEGYLKTQDT (157 aa)). GTP-binding positions include 224 to 229 (NVGKSS), 243 to 249 (SDEAGTT), and 268 to 271 (DTAG). Positions 228 and 249 each coordinate Mg(2+). Lysine 441 serves as a coordination point for (6S)-5-formyl-5,6,7,8-tetrahydrofolate.

This sequence belongs to the TRAFAC class TrmE-Era-EngA-EngB-Septin-like GTPase superfamily. TrmE GTPase family. In terms of assembly, homodimer. Heterotetramer of two MnmE and two MnmG subunits. Requires K(+) as cofactor.

Its subcellular location is the cytoplasm. In terms of biological role, exhibits a very high intrinsic GTPase hydrolysis rate. Involved in the addition of a carboxymethylaminomethyl (cmnm) group at the wobble position (U34) of certain tRNAs, forming tRNA-cmnm(5)s(2)U34. This chain is tRNA modification GTPase MnmE, found in Campylobacter concisus (strain 13826).